The chain runs to 353 residues: Photosystem II D2 protein (353 aa).

An N-acetylthreonine modification is found at Thr2. Thr2 is modified (phosphothreonine). Residues 41-61 (CAYFALGGWFTGTTFVTSWYT) traverse the membrane as a helical segment. Residue His118 coordinates chlorophyll a. Residues 125–141 (GFMLRQFEIARSVNLRP) form a helical membrane-spanning segment. 2 residues coordinate pheophytin a: Gln130 and Asn143. Residues 153-166 (VFVSVFLIYPLGQS) form a helical membrane-spanning segment. His198 is a chlorophyll a binding site. Residues 208 to 228 (AALLCAIHGATVENTLFEDGD) traverse the membrane as a helical segment. Residues His215 and Phe262 each coordinate a plastoquinone. A Fe cation-binding site is contributed by His215. Fe cation is bound at residue His269. Residues 279 to 295 (GLWMSAIGVVGLALNLR) traverse the membrane as a helical segment.

It belongs to the reaction center PufL/M/PsbA/D family. In terms of assembly, PSII is composed of 1 copy each of membrane proteins PsbA, PsbB, PsbC, PsbD, PsbE, PsbF, PsbH, PsbI, PsbJ, PsbK, PsbL, PsbM, PsbT, PsbX, PsbY, PsbZ, Psb30/Ycf12, at least 3 peripheral proteins of the oxygen-evolving complex and a large number of cofactors. It forms dimeric complexes. The cofactor is The D1/D2 heterodimer binds P680, chlorophylls that are the primary electron donor of PSII, and subsequent electron acceptors. It shares a non-heme iron and each subunit binds pheophytin, quinone, additional chlorophylls, carotenoids and lipids. There is also a Cl(-1) ion associated with D1 and D2, which is required for oxygen evolution. The PSII complex binds additional chlorophylls, carotenoids and specific lipids..

It localises to the plastid. Its subcellular location is the chloroplast thylakoid membrane. The catalysed reaction is 2 a plastoquinone + 4 hnu + 2 H2O = 2 a plastoquinol + O2. Its function is as follows. Photosystem II (PSII) is a light-driven water:plastoquinone oxidoreductase that uses light energy to abstract electrons from H(2)O, generating O(2) and a proton gradient subsequently used for ATP formation. It consists of a core antenna complex that captures photons, and an electron transfer chain that converts photonic excitation into a charge separation. The D1/D2 (PsbA/PsbD) reaction center heterodimer binds P680, the primary electron donor of PSII as well as several subsequent electron acceptors. D2 is needed for assembly of a stable PSII complex. This Tetradesmus obliquus (Green alga) protein is Photosystem II D2 protein.